Consider the following 707-residue polypeptide: DCC-interacting protein 13-alpha (707 aa).

Positions 1–428 are required for RAB5A binding; the sequence is MPGIDKLPIE…PPTARTSSSG (428 aa). A BAR domain is found at 3–268; the sequence is GIDKLPIEET…DPLYLPDPDP (266 aa). A coiled-coil region spans residues 234-257; sequence QNVRREMDGDVETMQQTIEDLEVA. Residues 277-375 enclose the PH domain; it reads LTRKAGYLNA…WICTINNISK (99 aa). Disordered stretches follow at residues 397–433, 466–490, and 636–707; these read AVTP…LGSE, GQAK…STKS, and EKQK…ESEA. Thr-399 carries the post-translational modification Phosphothreonine. A Phosphoserine modification is found at Ser-401. A F&amp;H motif is present at residues 403-414; it reads SFQQRHESLRPG. Ser-410 is subject to Phosphoserine; by PKA. A PID domain is found at 495 to 655; that stretch reads SILHQLFIVR…EKQQKELSKQ (161 aa). Residues 620–670 adopt a coiled-coil conformation; sequence LAKQIALHAELDRRASEKQKEIERVKEKQQKELSKQKQIEKDLEEQSRLIA. Residues 636–666 show a composition bias toward basic and acidic residues; that stretch reads EKQKEIERVKEKQQKELSKQKQIEKDLEEQS. A compositionally biased stretch (low complexity) spans 679–691; the sequence is GSEGQLVLSSSQS. Phosphoserine occurs at positions 691 and 694. The segment covering 698–707 has biased composition (basic and acidic residues); it reads EEGKKRESEA.

In terms of assembly, homodimer. Binds RAB5A/Rab5 through an N-terminal domain. This interaction is essential for its recruitment to endosomal membranes as well as its role in cell proliferation. Binds DCC and the catalytic domain of the inactive form of AKT2 through its PID domain. Binds PIK3CA and subunits of the NuRD/MeCP1 complex. Interacts with OCRL and INPP5B. Interacts with NTRK2. Interacts with APPL2; interaction is independent of follicle stimulating hormone stimulation; interaction is decreased by adiponectin in a time-dependent manner. Forms a complex with APPL2 and RUVBL2. Forms a complex comprising APPL2, RUVBL2, CTNNB1, HDAC1 and HDAC2; interaction reduces interaction between CTNNB1, HDAC1, HDAC2 and RUVBL2 leading to the decrease of deacetylase activity of this complex; affects the recruitment of repressive complexes to the Wnt target genes. Interacts with ANXA2. Interacts with TGFBR1; interaction is TGF beta dependent; mediates trafficking of the TGFBR1 from the endosomes to the nucleus via microtubules in a TRAF6-dependent manner. Interacts with PRKCZ. Interacts with PIK3R1 and APPL2. Interacts with ADIPOR1; ADIPOQ enhances this interaction; inhibites adiponectin-stimulated binding of APPL2 to ADIPOR1. Phosphorylation at Ser-410 by PKA severely impairs binding to OCRL. Expressed in insulin-target tissues including skeletal muscle, liver, fat, and brain.

The protein localises to the early endosome membrane. The protein resides in the nucleus. Its subcellular location is the cytoplasm. It is found in the endosome. It localises to the cell projection. The protein localises to the ruffle. The protein resides in the cytoplasmic vesicle. Its subcellular location is the phagosome. Functionally, multifunctional adapter protein that binds to various membrane receptors, nuclear factors and signaling proteins to regulate many processes, such as cell proliferation, immune response, endosomal trafficking and cell metabolism. Regulates signaling pathway leading to cell proliferation through interaction with RAB5A and subunits of the NuRD/MeCP1 complex. Functions as a positive regulator of innate immune response via activation of AKT1 signaling pathway by forming a complex with APPL1 and PIK3R1. Inhibits Fc-gamma receptor-mediated phagocytosis through PI3K/Akt signaling in macrophages. Regulates TLR4 signaling in activated macrophages. Involved in trafficking of the TGFBR1 from the endosomes to the nucleus via microtubules in a TRAF6-dependent manner. Plays a role in cell metabolism by regulating adiponecting and insulin signaling pathways. Required for fibroblast migration through HGF cell signaling. Positive regulator of beta-catenin/TCF-dependent transcription through direct interaction with RUVBL2/reptin resulting in the relief of RUVBL2-mediated repression of beta-catenin/TCF target genes by modulating the interactions within the beta-catenin-reptin-HDAC complex. The polypeptide is DCC-interacting protein 13-alpha (Mus musculus (Mouse)).